Consider the following 383-residue polypeptide: Methenyltetrahydrofolate synthase domain-containing protein (383 aa).

The tract at residues 249 to 301 (AGKDVTLQGEHQHLPEPGCQQTVPLSVGRRPPDTPGPETNSMEAAPGSPPGEG) is disordered. Residues 306–379 (ADVYVGNLPG…DTLRVALARQ (74 aa)) enclose the RRM domain.

This is Methenyltetrahydrofolate synthase domain-containing protein (MTHFSD) from Homo sapiens (Human).